A 962-amino-acid chain; its full sequence is Leucine--tRNA ligase (962 aa).

The 'HIGH' region signature appears at 41 to 51 (PYLNGNLHAGH). A 'KMSKS' region motif is present at residues 631-635 (KMSKS). An ATP-binding site is contributed by K634.

This sequence belongs to the class-I aminoacyl-tRNA synthetase family.

It localises to the cytoplasm. It catalyses the reaction tRNA(Leu) + L-leucine + ATP = L-leucyl-tRNA(Leu) + AMP + diphosphate. The protein is Leucine--tRNA ligase of Methanococcoides burtonii (strain DSM 6242 / NBRC 107633 / OCM 468 / ACE-M).